The chain runs to 1269 residues: DNA-directed RNA polymerase subunit beta'' (1269 aa).

Zn(2+)-binding residues include Cys226, Cys301, Cys308, and Cys311.

This sequence belongs to the RNA polymerase beta' chain family. RpoC2 subfamily. In terms of assembly, in plastids the minimal PEP RNA polymerase catalytic core is composed of four subunits: alpha, beta, beta', and beta''. When a (nuclear-encoded) sigma factor is associated with the core the holoenzyme is formed, which can initiate transcription. It depends on Zn(2+) as a cofactor.

The protein localises to the plastid. It localises to the chloroplast. It carries out the reaction RNA(n) + a ribonucleoside 5'-triphosphate = RNA(n+1) + diphosphate. Functionally, DNA-dependent RNA polymerase catalyzes the transcription of DNA into RNA using the four ribonucleoside triphosphates as substrates. The sequence is that of DNA-directed RNA polymerase subunit beta'' from Cyanidium caldarium (Red alga).